We begin with the raw amino-acid sequence, 128 residues long: Large ribosomal subunit protein uL22 (128 aa).

This sequence belongs to the universal ribosomal protein uL22 family. Part of the 50S ribosomal subunit.

This protein binds specifically to 23S rRNA; its binding is stimulated by other ribosomal proteins, e.g. L4, L17, and L20. It is important during the early stages of 50S assembly. It makes multiple contacts with different domains of the 23S rRNA in the assembled 50S subunit and ribosome. In terms of biological role, the globular domain of the protein is located near the polypeptide exit tunnel on the outside of the subunit, while an extended beta-hairpin is found that lines the wall of the exit tunnel in the center of the 70S ribosome. In Rhodopseudomonas palustris (strain BisA53), this protein is Large ribosomal subunit protein uL22.